A 209-amino-acid polypeptide reads, in one-letter code: Large ribosomal subunit protein uL3 (209 aa).

The segment at A122–P151 is disordered.

Belongs to the universal ribosomal protein uL3 family. In terms of assembly, part of the 50S ribosomal subunit. Forms a cluster with proteins L14 and L19.

One of the primary rRNA binding proteins, it binds directly near the 3'-end of the 23S rRNA, where it nucleates assembly of the 50S subunit. The polypeptide is Large ribosomal subunit protein uL3 (Bacillus velezensis (strain DSM 23117 / BGSC 10A6 / LMG 26770 / FZB42) (Bacillus amyloliquefaciens subsp. plantarum)).